The chain runs to 625 residues: Endoglucanase 13 (625 aa).

An N-terminal signal peptide occupies residues 1 to 34; the sequence is MAATMNKTPATTFLLIPAAASLVLLLAAAASVEA. Catalysis depends on Asp91, which acts as the Nucleophile. His427 is an active-site residue. Asn440 is a glycosylation site (N-linked (GlcNAc...) asparagine). Residues Asp479 and Glu488 contribute to the active site. The disordered stretch occupies residues 509 to 530; the sequence is ADNTPEYTPAPNAPSPSNGGSP.

It belongs to the glycosyl hydrolase 9 (cellulase E) family. In terms of tissue distribution, expressed in roots and flowers.

The protein localises to the secreted. The enzyme catalyses Endohydrolysis of (1-&gt;4)-beta-D-glucosidic linkages in cellulose, lichenin and cereal beta-D-glucans.. This chain is Endoglucanase 13 (GLU6), found in Oryza sativa subsp. japonica (Rice).